The sequence spans 240 residues: Serine protease SplB (240 aa).

The first 36 residues, 1-36 (MNKNVVIKSLAALTILTSVTGIGITLVEEVQQTAKA), serve as a signal peptide directing secretion. Active-site charge relay system residues include H75, D113, and S193.

This sequence belongs to the peptidase S1B family.

The protein localises to the secreted. Functionally, serine protease that cleaves specifically after the sequence Trp-Glu-Leu-Gln. The protein is Serine protease SplB (splB) of Staphylococcus aureus (strain MW2).